The chain runs to 432 residues: Tol-Pal system protein TolB (432 aa).

Residues 1–24 (MKLVTRMWSILIVFFLAVLQPAQA) form the signal peptide.

The protein belongs to the TolB family. The Tol-Pal system is composed of five core proteins: the inner membrane proteins TolA, TolQ and TolR, the periplasmic protein TolB and the outer membrane protein Pal. They form a network linking the inner and outer membranes and the peptidoglycan layer.

It is found in the periplasm. Part of the Tol-Pal system, which plays a role in outer membrane invagination during cell division and is important for maintaining outer membrane integrity. The chain is Tol-Pal system protein TolB from Pasteurella multocida (strain Pm70).